A 142-amino-acid chain; its full sequence is Large ribosomal subunit protein uL11 (142 aa).

This sequence belongs to the universal ribosomal protein uL11 family. As to quaternary structure, part of the ribosomal stalk of the 50S ribosomal subunit. Interacts with L10 and the large rRNA to form the base of the stalk. L10 forms an elongated spine to which L12 dimers bind in a sequential fashion forming a multimeric L10(L12)X complex. In terms of processing, one or more lysine residues are methylated.

In terms of biological role, forms part of the ribosomal stalk which helps the ribosome interact with GTP-bound translation factors. This Glaesserella parasuis serovar 5 (strain SH0165) (Haemophilus parasuis) protein is Large ribosomal subunit protein uL11.